The primary structure comprises 65 residues: Small ribosomal subunit protein bS21 (65 aa).

A compositionally biased stretch (basic and acidic residues) spans 33 to 42 (RRREHYEKPS). The tract at residues 33–65 (RRREHYEKPSVKRKRKEAARLRKLQKMAREANN) is disordered. A compositionally biased stretch (basic residues) spans 43–58 (VKRKRKEAARLRKLQK).

This sequence belongs to the bacterial ribosomal protein bS21 family.

This Herpetosiphon aurantiacus (strain ATCC 23779 / DSM 785 / 114-95) protein is Small ribosomal subunit protein bS21.